Reading from the N-terminus, the 351-residue chain is Soluble interferon alpha/beta receptor OPG204 (351 aa).

Residues 1–19 (MTMKMMVHIYFVSLLLLLF) form the signal peptide. Ig-like C2-type domains follow at residues 65–147 (LGEP…RSHI) and 155–237 (PKTY…IVVS). 2 cysteine pairs are disulfide-bonded: Cys73-Cys129 and Cys172-Cys221. Asn117, Asn182, Asn261, Asn269, and Asn321 each carry an N-linked (GlcNAc...) asparagine; by host glycan. The region spanning 246–345 (PSQDHRFKLI…HNYYFEKTLT (100 aa)) is the Ig-like V-type domain. Cys272 and Cys333 are disulfide-bonded.

Belongs to the interleukin-1 receptor family. Interacts with host IFNA1.

Its subcellular location is the secreted. Functionally, counteracts the antiviral effects of host IFN-alpha/beta and key IFN-inducible proteins involved in viral RNA degradation suxh as host OAS1. Acts as a soluble IFN-alpha receptor and thus inhibits the interaction between host IFN-alpha and its receptor. The sequence is that of Soluble interferon alpha/beta receptor OPG204 (OPG204) from Vaccinia virus (strain Western Reserve) (VACV).